A 125-amino-acid polypeptide reads, in one-letter code: UPF0102 protein PSPA7_4996 (125 aa).

This sequence belongs to the UPF0102 family.

The polypeptide is UPF0102 protein PSPA7_4996 (Pseudomonas paraeruginosa (strain DSM 24068 / PA7) (Pseudomonas aeruginosa (strain PA7))).